A 788-amino-acid chain; its full sequence is Diacylglycerol kinase gamma (788 aa).

Positions 83 to 93 (PRQETPDHPKE) are enriched in basic and acidic residues. The interval 83-150 (PRQETPDHPK…WGEPNAPASS (68 aa)) is disordered. Residues 95-109 (ASSSEPNVSDSNAES) are compositionally biased toward polar residues. EF-hand domains are found at residues 172–207 (RPQD…MLHV) and 217–252 (ELRP…TIPL). Ca(2+) contacts are provided by Asp-185, Asp-187, Asn-189, Glu-196, Asp-230, Asn-232, Asp-234, and Glu-241. 2 Phorbol-ester/DAG-type zinc fingers span residues 268 to 318 (RHAW…IPGC) and 333 to 380 (QHAW…STAC). Residues 427 to 561 (PGTHPLLVLV…LDRWYLEVMP (135 aa)) enclose the DAGKc domain. Residues 768–788 (MMGPPQKSSFFSLRRKSRSKD) are disordered.

This sequence belongs to the eukaryotic diacylglycerol kinase family. Expressed specifically in brain. Highly expressed in cerebellar Purkinje cells (at protein level).

The protein localises to the membrane. Its subcellular location is the cytoplasm. It localises to the cytosol. It is found in the cytoskeleton. It catalyses the reaction a 1,2-diacyl-sn-glycerol + ATP = a 1,2-diacyl-sn-glycero-3-phosphate + ADP + H(+). The catalysed reaction is 1,2-didecanoyl-sn-glycerol + ATP = 1,2-didecanoyl-sn-glycero-3-phosphate + ADP + H(+). The enzyme catalyses 1,2-di-(9Z-octadecenoyl)-sn-glycerol + ATP = 1,2-di-(9Z-octadecenoyl)-sn-glycero-3-phosphate + ADP + H(+). It carries out the reaction 1-octadecanoyl-2-(9Z,12Z)-octadecadienoyl-sn-glycerol + ATP = 1-octadecanoyl-2-(9Z,12Z-octadecadienoyl)-sn-glycero-3-phosphate + ADP + H(+). It catalyses the reaction 1-octadecanoyl-2-(5Z,8Z,11Z,14Z-eicosatetraenoyl)-sn-glycerol + ATP = 1-octadecanoyl-2-(5Z,8Z,11Z,14Z-eicosatetraenoyl)-sn-glycero-3-phosphate + ADP + H(+). Its pathway is lipid metabolism; glycerolipid metabolism. The activity is calcium-dependent. Requires phosphatidylserine for maximal activity. Its function is as follows. Diacylglycerol kinase that converts diacylglycerol/DAG into phosphatidic acid/phosphatidate/PA and regulates the respective levels of these two bioactive lipids. Thereby, acts as a central switch between the signaling pathways activated by these second messengers with different cellular targets and opposite effects in numerous biological processes. Has no apparent specificity with regard to the acyl compositions of diacylglycerol. Specifically expressed in the cerebellum where it controls the level of diacylglycerol which in turn regulates the activity of protein kinase C gamma. Through protein kinase C gamma, indirectly regulates the dendritic development of Purkinje cells, cerebellar long term depression and ultimately cerebellar motor coordination. The protein is Diacylglycerol kinase gamma (Dgkg) of Rattus norvegicus (Rat).